The primary structure comprises 736 residues: Microtubule-associated protein mu-2 (736 aa).

The protein belongs to the orthoreovirus mu-2 protein family. Interacts with protein mu-NS; in viral inclusions. Interacts with polymerase lambda-3; this interaction stimulates the ATPase activity of mu-2. It depends on a divalent metal cation as a cofactor.

The protein resides in the virion. It is found in the host cytoplasm. Its subcellular location is the host cytoskeleton. Functionally, minor inner capsid (core) component. Displays NTPase and RNA 5'-triphosphatase (RTPase) activities. ATP is the preferred substrate for hydrolysis. May function as a cofactor of polymerase lambda-3. Associates with microtubules and plays a role in the formation, structural organization and morphology of viral inclusions, where the assembly of cores and the replication of viral RNA occur. Together with mu-NS, recruits the other core proteins to these inclusions. This Mammalia (T1L) protein is Microtubule-associated protein mu-2 (M1).